The following is a 537-amino-acid chain: Pentatricopeptide repeat-containing protein At1g02370, mitochondrial (537 aa).

A mitochondrion-targeting transit peptide spans 1–18 (MNFRNLIASGSRLGKRFC). PPR repeat units lie at residues 171 to 205 (HQST…NFVN), 206 to 240 (NSLP…GISP), 241 to 275 (CGVT…SEAK), 277 to 307 (TWNT…MEEK), 312 to 346 (NRDS…RPEV), 347 to 377 (NNLS…WESK), and 382 to 416 (DMRL…SKGP).

Belongs to the PPR family. P subfamily.

It is found in the mitochondrion. This Arabidopsis thaliana (Mouse-ear cress) protein is Pentatricopeptide repeat-containing protein At1g02370, mitochondrial.